The following is a 251-amino-acid chain: Hydroxyacylglutathione hydrolase (251 aa).

Residues histidine 53, histidine 55, aspartate 57, histidine 58, histidine 110, aspartate 127, and histidine 165 each coordinate Zn(2+).

This sequence belongs to the metallo-beta-lactamase superfamily. Glyoxalase II family. In terms of assembly, monomer. The cofactor is Zn(2+).

It carries out the reaction an S-(2-hydroxyacyl)glutathione + H2O = a 2-hydroxy carboxylate + glutathione + H(+). Its pathway is secondary metabolite metabolism; methylglyoxal degradation; (R)-lactate from methylglyoxal: step 2/2. Functionally, thiolesterase that catalyzes the hydrolysis of S-D-lactoyl-glutathione to form glutathione and D-lactic acid. The protein is Hydroxyacylglutathione hydrolase of Buchnera aphidicola subsp. Acyrthosiphon pisum (strain APS) (Acyrthosiphon pisum symbiotic bacterium).